Reading from the N-terminus, the 136-residue chain is Transport protein particle 20 kDa subunit (136 aa).

Belongs to the TRAPP small subunits family. Sedlin subfamily.

The protein localises to the cytoplasm. The protein resides in the golgi apparatus. It localises to the cis-Golgi network. It is found in the endoplasmic reticulum. Component of the TRAPP I and TRAPP II complexes. TRAPP I plays a key role in the late stages of endoplasmic reticulum to Golgi traffic. TRAPP II seems to play a role in intra-Golgi transport. This chain is Transport protein particle 20 kDa subunit (trs20), found in Schizosaccharomyces pombe (strain 972 / ATCC 24843) (Fission yeast).